Here is a 425-residue protein sequence, read N- to C-terminus: Interferon regulatory factor 8 (425 aa).

Residues 7-114 (GRRLRQWLIE…EPYKVYRIVP (108 aa)) constitute a DNA-binding region (IRF tryptophan pentad repeat).

This sequence belongs to the IRF family.

The protein localises to the nucleus. The protein resides in the cytoplasm. Plays a role as a transcriptional activator or repressor. Specifically binds to the upstream regulatory region of type I IFN and IFN-inducible MHC class I genes (the interferon consensus sequence (ICS)). Plays a regulatory role in cells of the immune system. This is Interferon regulatory factor 8 (IRF8) from Gallus gallus (Chicken).